Consider the following 660-residue polypeptide: Probable serine/threonine-protein kinase CE0033 (660 aa).

In terms of domain architecture, Protein kinase spans 9 to 278 (YELGASIGSG…AEMAADLELL (270 aa)). Residues 15–23 (IGSGGMSEV) and K38 each bind ATP. Residue D136 is the Proton acceptor of the active site. Positions 288–319 (RAHVEKPDEPETVVVPQRLSTPPPPPTPAMPA) are disordered. PASTA domains lie at 377-443 (SAST…TISS), 444-512 (GREV…TVST), and 513-577 (GPSL…EISN).

Belongs to the protein kinase superfamily. Ser/Thr protein kinase family.

It carries out the reaction L-seryl-[protein] + ATP = O-phospho-L-seryl-[protein] + ADP + H(+). The catalysed reaction is L-threonyl-[protein] + ATP = O-phospho-L-threonyl-[protein] + ADP + H(+). The sequence is that of Probable serine/threonine-protein kinase CE0033 from Corynebacterium efficiens (strain DSM 44549 / YS-314 / AJ 12310 / JCM 11189 / NBRC 100395).